A 119-amino-acid chain; its full sequence is Holo-[acyl-carrier-protein] synthase (119 aa).

Mg(2+)-binding residues include Asp8 and Glu58.

This sequence belongs to the P-Pant transferase superfamily. AcpS family. Mg(2+) is required as a cofactor.

The protein localises to the cytoplasm. The enzyme catalyses apo-[ACP] + CoA = holo-[ACP] + adenosine 3',5'-bisphosphate + H(+). In terms of biological role, transfers the 4'-phosphopantetheine moiety from coenzyme A to a Ser of acyl-carrier-protein. The chain is Holo-[acyl-carrier-protein] synthase from Bacillus cereus (strain ATCC 10987 / NRS 248).